The following is a 175-amino-acid chain: ATP synthase subunit b, chloroplastic (175 aa).

Residues 22–42 (VFETNIINLAAVVGIVVSFVG) traverse the membrane as a helical segment.

The protein belongs to the ATPase B chain family. As to quaternary structure, F-type ATPases have 2 components, F(1) - the catalytic core - and F(0) - the membrane proton channel. F(1) has five subunits: alpha(3), beta(3), gamma(1), delta(1), epsilon(1). F(0) has four main subunits: a(1), b(1), b'(1) and c(10-14). The alpha and beta chains form an alternating ring which encloses part of the gamma chain. F(1) is attached to F(0) by a central stalk formed by the gamma and epsilon chains, while a peripheral stalk is formed by the delta, b and b' chains.

The protein localises to the plastid. The protein resides in the chloroplast thylakoid membrane. Functionally, f(1)F(0) ATP synthase produces ATP from ADP in the presence of a proton or sodium gradient. F-type ATPases consist of two structural domains, F(1) containing the extramembraneous catalytic core and F(0) containing the membrane proton channel, linked together by a central stalk and a peripheral stalk. During catalysis, ATP synthesis in the catalytic domain of F(1) is coupled via a rotary mechanism of the central stalk subunits to proton translocation. Component of the F(0) channel, it forms part of the peripheral stalk, linking F(1) to F(0). The polypeptide is ATP synthase subunit b, chloroplastic (Chlamydomonas reinhardtii (Chlamydomonas smithii)).